A 566-amino-acid polypeptide reads, in one-letter code: ATP-dependent RNA helicase DBP3 (566 aa).

The disordered stretch occupies residues 1-139 (MSAGKKHARD…TTPNGSAQRN (139 aa)). Basic residues predominate over residues 39 to 58 (DKKKKDKKDKKERKEKKEKK). The span at 81–91 (SEPKPEKEKKE) shows a compositional bias: basic and acidic residues. A compositionally biased stretch (basic residues) spans 92-102 (KNNKKDKKDKK). Over residues 127–139 (AATTTPNGSAQRN) the composition is skewed to polar residues. The Q motif signature appears at 182–209 (IHFSHLPTSTLTSKKPFASFTAPTPIQA). A Helicase ATP-binding domain is found at 212–396 (WPFALSGRDV…EGFMIDPVKA (185 aa)). 225 to 232 (AETGSGKT) contributes to the ATP binding site. Positions 342 to 345 (DEAD) match the DEAD box motif. Residues 433 to 566 (GKEQRLLELL…TEHDKSHSGS (134 aa)) enclose the Helicase C-terminal domain.

It belongs to the DEAD box helicase family. DDX5/DBP2 subfamily.

It localises to the nucleus. It is found in the nucleolus. The catalysed reaction is ATP + H2O = ADP + phosphate + H(+). In terms of biological role, ATP-dependent RNA helicase required for 60S ribosomal subunit synthesis. Involved in efficient pre-rRNA processing, predominantly at site A3, which is necessary for the normal formation of 25S and 5.8S rRNAs. The protein is ATP-dependent RNA helicase DBP3 (DBP3) of Chaetomium globosum (strain ATCC 6205 / CBS 148.51 / DSM 1962 / NBRC 6347 / NRRL 1970) (Soil fungus).